The primary structure comprises 327 residues: Zinc transport protein ZntB (327 aa).

Residues 1 to 273 (MEAIKGSDVN…ARRTYTMSLM (273 aa)) are Cytoplasmic-facing. The chain crosses the membrane as a helical span at residues 274 to 294 (AMVFLPSTFLTGLFGVNLGGI). Over 295-300 (PGGGWR) the chain is Periplasmic. Residues 301 to 321 (FGFSLFCILLVVLIGGVTLWL) form a helical membrane-spanning segment. Residues 322–327 (HRSKWL) are Cytoplasmic-facing.

This sequence belongs to the CorA metal ion transporter (MIT) (TC 1.A.35) family.

It localises to the cell inner membrane. It catalyses the reaction Zn(2+)(out) + H(+)(out) = Zn(2+)(in) + H(+)(in). Its function is as follows. Zinc transporter. Acts as a Zn(2+):proton symporter, which likely mediates zinc ion uptake. This chain is Zinc transport protein ZntB, found in Salmonella choleraesuis (strain SC-B67).